The sequence spans 474 residues: MSLSRRQFIQAAGLALGAGSLPLRAQASSTQQPQLPVPPLLESRRGQPLFLTLQRAHWAFSGNKKAAVWGINGMYLGPTVRVFNGDDVKLIYSNRLTEPVSMTISGLQVPGTLMGGEARMIRPGEDWSPVLPVRQPAANCWYHANTPNRMAPHVYNGLAGMWLVEDAVSKAMPLPSHYGVDDFPLIIQDKRLDNFGVPEYNPPAKGGFVGDTLLVNGAQSPFVEVSRGWVRLRLLNASNARRYTLQLSDGRPLYVVASDQGFLPAPVAVQQLSLAPGERREVVIDMSQGNEVSITAGESAGIMDRLRGLFEPSSILISTLVLTLKPTGLLPLVTDNLPMRLLADQIIEGSVIRSREFQLGDNLPGINGAIWDMNRVDVQAQQGTWERWIIHADMPQAFHIQGVSFLVKSVNGAAAMAEDRGWKDTVWVDGTVELWVYFNQVSSPQFPFLFYSQTLEMADRGSAGQLVTVAAPTL.

The segment at residues 1-27 (MSLSRRQFIQAAGLALGAGSLPLRAQA) is a signal peptide (tat-type signal). Residues 229–288 (WVRLRLLNASNARRYTLQLSDGRPLYVVASDQGFLPAPVAVQQLSLAPGERREVVIDMSQ) enclose the Plastocyanin-like domain.

This sequence belongs to the FtsP family. Post-translationally, predicted to be exported by the Tat system. The position of the signal peptide cleavage has not been experimentally proven.

The protein localises to the periplasm. In terms of biological role, cell division protein that is required for growth during stress conditions. May be involved in protecting or stabilizing the divisomal assembly under conditions of stress. The protein is Cell division protein FtsP of Yersinia pestis.